Reading from the N-terminus, the 435-residue chain is Eukaryotic translation initiation factor 3 subunit E (435 aa).

The region spanning Thr-241–Gln-409 is the PCI domain.

Belongs to the eIF-3 subunit E family. Component of the eukaryotic translation initiation factor 3 (eIF-3) complex.

Its subcellular location is the cytoplasm. Its function is as follows. Component of the eukaryotic translation initiation factor 3 (eIF-3) complex, which is involved in protein synthesis of a specialized repertoire of mRNAs and, together with other initiation factors, stimulates binding of mRNA and methionyl-tRNAi to the 40S ribosome. The eIF-3 complex specifically targets and initiates translation of a subset of mRNAs involved in cell proliferation. The chain is Eukaryotic translation initiation factor 3 subunit E from Phaeosphaeria nodorum (strain SN15 / ATCC MYA-4574 / FGSC 10173) (Glume blotch fungus).